Consider the following 305-residue polypeptide: Ribonuclease H (305 aa).

The enzyme catalyses Endonucleolytic cleavage to 5'-phosphomonoester.. Its function is as follows. Plays essential roles in DNA replication by removing the RNA primers from lagging strand fragments. Exhibits 5'to 3' exonuclease activity on either RNA/DNA or DNA/DNA duplexes and endonuclease activity on either flap or fork DNA structures. This Enterobacteria phage T4 (Bacteriophage T4) protein is Ribonuclease H (rnh).